A 742-amino-acid polypeptide reads, in one-letter code: Phosphoribosylformylglycinamidine synthase subunit PurL (742 aa).

Residue His-54 is part of the active site. Residues Tyr-57 and Lys-96 each contribute to the ATP site. Glu-98 is a Mg(2+) binding site. Substrate-binding positions include 99 to 102 and Arg-121; that span reads SHNH. The active-site Proton acceptor is the His-100. Asp-122 is a Mg(2+) binding site. Gln-245 contributes to the substrate binding site. Residue Asp-273 coordinates Mg(2+). Residue 317–319 participates in substrate binding; sequence ESQ. The ATP site is built by Asp-500 and Gly-537. Residue Asn-538 participates in Mg(2+) binding. Ser-540 contributes to the substrate binding site.

Belongs to the FGAMS family. As to quaternary structure, monomer. Part of the FGAM synthase complex composed of 1 PurL, 1 PurQ and 2 PurS subunits.

It localises to the cytoplasm. It catalyses the reaction N(2)-formyl-N(1)-(5-phospho-beta-D-ribosyl)glycinamide + L-glutamine + ATP + H2O = 2-formamido-N(1)-(5-O-phospho-beta-D-ribosyl)acetamidine + L-glutamate + ADP + phosphate + H(+). It functions in the pathway purine metabolism; IMP biosynthesis via de novo pathway; 5-amino-1-(5-phospho-D-ribosyl)imidazole from N(2)-formyl-N(1)-(5-phospho-D-ribosyl)glycinamide: step 1/2. In terms of biological role, part of the phosphoribosylformylglycinamidine synthase complex involved in the purines biosynthetic pathway. Catalyzes the ATP-dependent conversion of formylglycinamide ribonucleotide (FGAR) and glutamine to yield formylglycinamidine ribonucleotide (FGAM) and glutamate. The FGAM synthase complex is composed of three subunits. PurQ produces an ammonia molecule by converting glutamine to glutamate. PurL transfers the ammonia molecule to FGAR to form FGAM in an ATP-dependent manner. PurS interacts with PurQ and PurL and is thought to assist in the transfer of the ammonia molecule from PurQ to PurL. The chain is Phosphoribosylformylglycinamidine synthase subunit PurL from Geobacillus thermodenitrificans (strain NG80-2).